The primary structure comprises 1379 residues: DNA-directed RNA polymerase subunit beta'' (1379 aa).

Residues cysteine 220, cysteine 293, cysteine 300, and cysteine 303 each contribute to the Zn(2+) site.

Belongs to the RNA polymerase beta' chain family. RpoC2 subfamily. As to quaternary structure, in plastids the minimal PEP RNA polymerase catalytic core is composed of four subunits: alpha, beta, beta', and beta''. When a (nuclear-encoded) sigma factor is associated with the core the holoenzyme is formed, which can initiate transcription. Requires Zn(2+) as cofactor.

Its subcellular location is the plastid. It localises to the chloroplast. The catalysed reaction is RNA(n) + a ribonucleoside 5'-triphosphate = RNA(n+1) + diphosphate. In terms of biological role, DNA-dependent RNA polymerase catalyzes the transcription of DNA into RNA using the four ribonucleoside triphosphates as substrates. This Capsella bursa-pastoris (Shepherd's purse) protein is DNA-directed RNA polymerase subunit beta''.